We begin with the raw amino-acid sequence, 1242 residues long: ATP-dependent RNA helicase DHX8 (1242 aa).

Disordered regions lie at residues 75-283 (RPSR…DDPE) and 354-449 (SMKE…GLLP). Basic and acidic residues-rich tracts occupy residues 87–97 (TVGDKKEDKKS), 113–141 (YSKKEESDDDEKVKAKPEKHSETHKKTDM), and 180–196 (RDRDTKRRSRSREDRHS). Composition is skewed to basic residues over residues 197–222 (DRRRSRSRDKERRRRSRSRDNRRRSR) and 232–252 (DRRHKSSSSRDHHERRRRSRS). The span at 253–269 (RSTERRDRRDRSRDCSE) shows a compositional bias: basic and acidic residues. Residues 285–356 (GKIYSGKIAN…TGQKVSLSMK (72 aa)) form the S1 motif domain. Residues 388–399 (FSSSTSMLNLQG) show a composition bias toward polar residues. Residues 439–449 (PDFDEETGLLP) are compositionally biased toward acidic residues. The Helicase ATP-binding domain occupies 596–759 (IKAVTDNQIL…FFKAPIFTIP (164 aa)). 609-616 (GETGSGKT) lines the ATP pocket. The DEAH box motif lies at 706–709 (DEAH). The Helicase C-terminal domain maps to 777–957 (YLDASLITVM…TTVLQLKTMG (181 aa)).

This sequence belongs to the DEAD box helicase family. DEAH subfamily. DDX8/PRP22 sub-subfamily. In terms of assembly, identified in the spliceosome C complex.

The protein resides in the nucleus. The catalysed reaction is ATP + H2O = ADP + phosphate + H(+). Functionally, involved in pre-mRNA splicing as component of the spliceosome. Facilitates nuclear export of spliced mRNA by releasing the RNA from the spliceosome. Before and after egg-chamber formation, required for nurse-cell chromatin dispersal (NCCD) probably by playing a role in spliceosome localization to chromatin/interchromatin spaces. The sequence is that of ATP-dependent RNA helicase DHX8 from Drosophila melanogaster (Fruit fly).